The following is a 378-amino-acid chain: MGIPKSSIYFCILLFCIISFYLQSSKDGPKELKVKYVFLKKATAKQRGESSLTDSDYFPKQPNMNATLFMLCRNRDIKDALVSIQSVEDRFNHRYHYPWTFMNDAPFTKEFITATSKMVSGDATYVQLNNEEWGIPINIDLNRMLKSIRDMTDDKVIYGFSLSYRIMCRFNSGFFYRNKALSHYDYYWRVEPGVEYSCDIPYDPFRKLSDENKAYGFVISMTDYYETLPSLWNVTRDFIHQNPQYLAQNNSLDFIVNDHQGLSGDYNLCHFWSNFEIANLNFFRSPAYTDYFAHLDKNYGFFYERWGDAPVHSLAASLFLNKSQIHYFEDFGYYHLPWYHCPTDVQSHATARCLCDPTGTIDYLPFSCAIKWLENINS.

The Cytoplasmic segment spans residues 1–6; it reads MGIPKS. Residues 7 to 24 form a helical; Signal-anchor for type II membrane protein membrane-spanning segment; the sequence is SIYFCILLFCIISFYLQS. Residues 25-378 lie on the Lumenal side of the membrane; it reads SKDGPKELKV…AIKWLENINS (354 aa). E276 functions as the Nucleophile in the catalytic mechanism.

It belongs to the glycosyltransferase 15 family.

It is found in the endoplasmic reticulum membrane. Its subcellular location is the golgi apparatus membrane. Probable mannosyltransferase involved in O-glycosylation of cell wall and secreted proteins. This chain is O-glycoside alpha-1,2-mannosyltransferase homolog 3 (omh3), found in Schizosaccharomyces pombe (strain 972 / ATCC 24843) (Fission yeast).